Reading from the N-terminus, the 149-residue chain is Transcriptional repressor NrdR (149 aa).

A zinc finger spans residues 3-34 (CPFCSATDTKVIDSRLVADGHQVRRRRECAEC). The ATP-cone domain maps to 49-139 (PRVVKQDGSR…VYRAFEDVSE (91 aa)).

It belongs to the NrdR family. It depends on Zn(2+) as a cofactor.

In terms of biological role, negatively regulates transcription of bacterial ribonucleotide reductase nrd genes and operons by binding to NrdR-boxes. This chain is Transcriptional repressor NrdR, found in Shewanella sediminis (strain HAW-EB3).